We begin with the raw amino-acid sequence, 334 residues long: MASVLQKLITPLFSGPLEPPRNKVTVVGVGQVGMACAVSVLLRELADELALVDVVEDKLKGEMMDLQHGSLFLKTPKIVSGKDYSVTANSRIVVVTAGVRQQEGESRLNLVQRNVNIFKHIIPQIVKYSPNCILIVVSNPVDVLTYVTWKLSGLPKHRVIGSGTNLDSARFRYLMAERLGIHPSSFNGWILGEHGDSSVPVWSGANVAGVSLQKLNPDIGKDTDRENWKETHKKVVDSAYEVIRLKGYTNWAIGLSVADLTESIMKNLNRVHPVSTMVKGMYGISDEVYLSLPCVLNSAGVGSVVNMTLTVDEVSQLKKSADMLWHIQRDLRDL.

NAD(+) is bound by residues 30–58 and arginine 100; that span reads GQVG…VEDK. 3 residues coordinate substrate: arginine 107, asparagine 139, and arginine 170. An NAD(+)-binding site is contributed by asparagine 139. Residue histidine 194 is the Proton acceptor of the active site. Residue threonine 249 coordinates substrate.

This sequence belongs to the LDH/MDH superfamily. LDH family. As to quaternary structure, homotetramer.

It is found in the cytoplasm. It catalyses the reaction (S)-lactate + NAD(+) = pyruvate + NADH + H(+). Its pathway is fermentation; pyruvate fermentation to lactate; (S)-lactate from pyruvate: step 1/1. The chain is L-lactate dehydrogenase B-B chain from Danio rerio (Zebrafish).